We begin with the raw amino-acid sequence, 207 residues long: Sodium/potassium-transporting ATPase subunit beta-1-interacting protein 1 (207 aa).

Helical transmembrane passes span G2–L22, A35–L55, and L62–F82. A glycan (N-linked (GlcNAc...) asparagine) is linked at N100. The helical transmembrane segment at A147–V167 threads the bilayer.

Belongs to the NKAIN family. In terms of assembly, interacts with atp1b1 C-terminus.

It is found in the cell membrane. This chain is Sodium/potassium-transporting ATPase subunit beta-1-interacting protein 1 (nkain1), found in Xenopus tropicalis (Western clawed frog).